The primary structure comprises 74 residues: Acyl carrier protein (74 aa).

The Carrier domain maps to 1–73 (MAVFEKVQEI…DLVAYVEEQA (73 aa)). The residue at position 35 (Ser35) is an O-(pantetheine 4'-phosphoryl)serine.

This sequence belongs to the acyl carrier protein (ACP) family. 4'-phosphopantetheine is transferred from CoA to a specific serine of apo-ACP by AcpS. This modification is essential for activity because fatty acids are bound in thioester linkage to the sulfhydryl of the prosthetic group.

Its subcellular location is the cytoplasm. Its pathway is lipid metabolism; fatty acid biosynthesis. In terms of biological role, carrier of the growing fatty acid chain in fatty acid biosynthesis. The polypeptide is Acyl carrier protein (Streptococcus pneumoniae serotype 4 (strain ATCC BAA-334 / TIGR4)).